A 172-amino-acid chain; its full sequence is RNA silencing suppressor p19 (172 aa).

A compositionally biased stretch (basic and acidic residues) spans 1-20; that stretch reads MERAIQGNDAREQANSERWD. Positions 1 to 38 are disordered; that stretch reads MERAIQGNDAREQANSERWDGGSGGTTSPFKLPDESPS.

This sequence belongs to the tombusviruses protein p19 family. As to quaternary structure, homodimer.

In terms of biological role, acts as a suppressor of RNA-mediated gene silencing, also known as post-transcriptional gene silencing (PTGS), a mechanism of plant viral defense that limits the accumulation of viral RNAs. Binds to short interfering RNAs (siRNAs) with high affinity. Acts as a molecular caliper to specifically select siRNAs based on the length of the duplex region of the RNA. The chain is RNA silencing suppressor p19 from Capsicum annuum (Capsicum pepper).